Consider the following 115-residue polypeptide: U3-lycotoxin-Ls1g (115 aa).

A signal peptide spans 1 to 20 (MKFVLLFGVFLVTLFSYSSA). A propeptide spanning residues 21–44 (EMLDDFDQADEDELLSLIEKEEAR) is cleaved from the precursor. 4 disulfide bridges follow: cysteine 48–cysteine 63, cysteine 55–cysteine 72, cysteine 62–cysteine 87, and cysteine 74–cysteine 85.

This sequence belongs to the neurotoxin 19 (CSTX) family. 01 subfamily. In terms of tissue distribution, expressed by the venom gland.

The protein resides in the secreted. This chain is U3-lycotoxin-Ls1g, found in Lycosa singoriensis (Wolf spider).